The primary structure comprises 439 residues: Ribosomal protein uS12 methylthiotransferase RimO (439 aa).

The MTTase N-terminal domain maps to 3–115 (KKLHLISLGC…IDQMVRERQG (113 aa)). [4Fe-4S] cluster is bound by residues C12, C46, C78, C147, C151, and C154. Residues 133–362 (TGSSVHAYVK…DKIIQKQHRA (230 aa)) form the Radical SAM core domain.

It belongs to the methylthiotransferase family. RimO subfamily. The cofactor is [4Fe-4S] cluster.

The protein localises to the cytoplasm. It carries out the reaction L-aspartate(89)-[ribosomal protein uS12]-hydrogen + (sulfur carrier)-SH + AH2 + 2 S-adenosyl-L-methionine = 3-methylsulfanyl-L-aspartate(89)-[ribosomal protein uS12]-hydrogen + (sulfur carrier)-H + 5'-deoxyadenosine + L-methionine + A + S-adenosyl-L-homocysteine + 2 H(+). In terms of biological role, catalyzes the methylthiolation of an aspartic acid residue of ribosomal protein uS12. This Wolinella succinogenes (strain ATCC 29543 / DSM 1740 / CCUG 13145 / JCM 31913 / LMG 7466 / NCTC 11488 / FDC 602W) (Vibrio succinogenes) protein is Ribosomal protein uS12 methylthiotransferase RimO.